We begin with the raw amino-acid sequence, 77 residues long: Spermatid-specific protein T2 (77 aa).

The interval M1–G21 is hydrophobic. The segment at M1–R77 is disordered. The segment covering G20–R77 has biased composition (basic residues).

In terms of processing, phosphorylation occurs at different degrees. The triphosphorylated form may be predominant in T2. SP2 appears to be phosphorylated in elongated spermatids, but dephosphorylated in mature sperm cells. As to expression, testis.

The protein resides in the nucleus. Its subcellular location is the chromosome. In terms of biological role, cuttlefish spermiogenesis is characterized by a double nuclear protein transition: histones -&gt; spermatid-specific proteins (T1/T2) -&gt; protamines (SP1/SP2). The protamines compact sperm DNA into a highly condensed, stable and inactive complex. In Sepia officinalis (Common cuttlefish), this protein is Spermatid-specific protein T2.